The sequence spans 124 residues: Alpha-amylase inhibitor 0.53 (124 aa).

4 disulfide bridges follow: cysteine 20–cysteine 41, cysteine 28–cysteine 83, cysteine 42–cysteine 99, and cysteine 54–cysteine 115.

This sequence belongs to the protease inhibitor I6 (cereal trypsin/alpha-amylase inhibitor) family. In terms of assembly, homodimer. Post-translationally, the disulfide bonds are essential for the inhibitor activity. As to expression, endosperm.

Its subcellular location is the secreted. Alpha-amylase inhibitor. The polypeptide is Alpha-amylase inhibitor 0.53 (Triticum aestivum (Wheat)).